The following is a 976-amino-acid chain: Vacuolar membrane protease (976 aa).

At 1-15 (MKLKSVFRSVLKYRK) the chain is on the cytoplasmic side. The helical transmembrane segment at 16-36 (TNLSLLLLITYSIITLLYIFD) threads the bilayer. Topologically, residues 37 to 359 (HERYKLNLPK…KFFVISAKTL (323 aa)) are vacuolar. Asn-96 and Asn-121 each carry an N-linked (GlcNAc...) asparagine glycan. His-156 and Asp-168 together coordinate Zn(2+). N-linked (GlcNAc...) asparagine glycosylation is present at Asn-189. The Proton acceptor role is filled by Glu-200. Glu-201 lines the Zn(2+) pocket. N-linked (GlcNAc...) asparagine glycosylation is found at Asn-212 and Asn-217. Residues Glu-226 and His-300 each contribute to the Zn(2+) site. Residues 360 to 380 (FYWNCIFLLVSPVVAIGLYLI) traverse the membrane as a helical segment. Residues 381-392 (SRDRMTWKSHSW) are Cytoplasmic-facing. The helical transmembrane segment at 393-412 (LSWTRFPLSLAAGIIVQKLF) threads the bilayer. At 413-428 (SNDIIRSNPLTFSRNY) the chain is on the vacuolar side. The chain crosses the membrane as a helical span at residues 429–449 (FWPISAFFTQVIFTSYVLINC). Over 450–461 (SNFFFPCADMKS) the chain is Cytoplasmic. A helical transmembrane segment spans residues 462 to 482 (LSIIELFIILWTILLFTSKLL). Over 483-496 (YSSDYRYTGLYPLS) the chain is Vacuolar. The helical transmembrane segment at 497 to 517 (IFFLLSTIAAILRLLALALGM) threads the bilayer. Topologically, residues 518–627 (RTRKRLGREC…NSLKLEYTDY (110 aa)) are cytoplasmic. Residues 528 to 610 (RDHHSNYSSH…PLLKGSNSME (83 aa)) are disordered. Polar residues predominate over residues 549–558 (NLEQPQDQFT). Over residues 559–570 (SSQDDQASIQDD) the composition is skewed to low complexity. Residues 582-601 (NVDEDHGMDSSSQQHDERVP) show a composition bias toward basic and acidic residues. The chain crosses the membrane as a helical span at residues 628-648 (AWIIQFLLIVPIPSFILFNSV). Residues 649-668 (DVIMDALNHTVQEGSKATFD) are Vacuolar-facing. An N-linked (GlcNAc...) asparagine glycan is attached at Asn-656. The helical transmembrane segment at 669 to 689 (VLRFGMVGSILMALPILPFFY) threads the bilayer. Residues 690–692 (KVN) are Cytoplasmic-facing. Residues 693-713 (YITISLTALLFLISASKTLLV) traverse the membrane as a helical segment. Over 714–976 (HPFTNSNPLK…LVIVKDAIIL (263 aa)) the chain is Vacuolar. N-linked (GlcNAc...) asparagine glycosylation is found at Asn-768, Asn-796, Asn-811, Asn-866, and Asn-937.

This sequence belongs to the peptidase M28 family. Requires Zn(2+) as cofactor.

Its subcellular location is the vacuole membrane. Its function is as follows. May be involved in vacuolar sorting and osmoregulation. The sequence is that of Vacuolar membrane protease from Saccharomyces cerevisiae (strain AWRI1631) (Baker's yeast).